The sequence spans 181 residues: Peptidyl-tRNA hydrolase (181 aa).

Position 14 (Y14) interacts with tRNA. The active-site Proton acceptor is H19. TRNA-binding residues include Y60, N62, and N108.

Belongs to the PTH family. In terms of assembly, monomer.

Its subcellular location is the cytoplasm. The enzyme catalyses an N-acyl-L-alpha-aminoacyl-tRNA + H2O = an N-acyl-L-amino acid + a tRNA + H(+). Hydrolyzes ribosome-free peptidyl-tRNAs (with 1 or more amino acids incorporated), which drop off the ribosome during protein synthesis, or as a result of ribosome stalling. In terms of biological role, catalyzes the release of premature peptidyl moieties from peptidyl-tRNA molecules trapped in stalled 50S ribosomal subunits, and thus maintains levels of free tRNAs and 50S ribosomes. The protein is Peptidyl-tRNA hydrolase of Metamycoplasma arthritidis (strain 158L3-1) (Mycoplasma arthritidis).